The chain runs to 241 residues: Phosphoribosylaminoimidazole-succinocarboxamide synthase (241 aa).

It belongs to the SAICAR synthetase family.

It catalyses the reaction 5-amino-1-(5-phospho-D-ribosyl)imidazole-4-carboxylate + L-aspartate + ATP = (2S)-2-[5-amino-1-(5-phospho-beta-D-ribosyl)imidazole-4-carboxamido]succinate + ADP + phosphate + 2 H(+). Its pathway is purine metabolism; IMP biosynthesis via de novo pathway; 5-amino-1-(5-phospho-D-ribosyl)imidazole-4-carboxamide from 5-amino-1-(5-phospho-D-ribosyl)imidazole-4-carboxylate: step 1/2. This chain is Phosphoribosylaminoimidazole-succinocarboxamide synthase, found in Methanoculleus marisnigri (strain ATCC 35101 / DSM 1498 / JR1).